The primary structure comprises 619 residues: Dihydroxy-acid dehydratase (619 aa).

Aspartate 81 contacts Mg(2+). Cysteine 122 contributes to the [2Fe-2S] cluster binding site. Residues aspartate 123 and lysine 124 each coordinate Mg(2+). Lysine 124 bears the N6-carboxylysine mark. Cysteine 198 lines the [2Fe-2S] cluster pocket. Glutamate 494 serves as a coordination point for Mg(2+). Residue serine 520 is the Proton acceptor of the active site.

This sequence belongs to the IlvD/Edd family. As to quaternary structure, homodimer. [2Fe-2S] cluster is required as a cofactor. The cofactor is Mg(2+).

The enzyme catalyses (2R)-2,3-dihydroxy-3-methylbutanoate = 3-methyl-2-oxobutanoate + H2O. The catalysed reaction is (2R,3R)-2,3-dihydroxy-3-methylpentanoate = (S)-3-methyl-2-oxopentanoate + H2O. It participates in amino-acid biosynthesis; L-isoleucine biosynthesis; L-isoleucine from 2-oxobutanoate: step 3/4. It functions in the pathway amino-acid biosynthesis; L-valine biosynthesis; L-valine from pyruvate: step 3/4. Functions in the biosynthesis of branched-chain amino acids. Catalyzes the dehydration of (2R,3R)-2,3-dihydroxy-3-methylpentanoate (2,3-dihydroxy-3-methylvalerate) into 2-oxo-3-methylpentanoate (2-oxo-3-methylvalerate) and of (2R)-2,3-dihydroxy-3-methylbutanoate (2,3-dihydroxyisovalerate) into 2-oxo-3-methylbutanoate (2-oxoisovalerate), the penultimate precursor to L-isoleucine and L-valine, respectively. The sequence is that of Dihydroxy-acid dehydratase from Neisseria gonorrhoeae (strain ATCC 700825 / FA 1090).